The primary structure comprises 260 residues: Thiazole synthase (260 aa).

The active-site Schiff-base intermediate with DXP is Lys-96. 1-deoxy-D-xylulose 5-phosphate-binding positions include Gly-157, 184–185 (AG), and 206–207 (NT).

The protein belongs to the ThiG family. As to quaternary structure, homotetramer. Forms heterodimers with either ThiH or ThiS.

The protein resides in the cytoplasm. It catalyses the reaction [ThiS sulfur-carrier protein]-C-terminal-Gly-aminoethanethioate + 2-iminoacetate + 1-deoxy-D-xylulose 5-phosphate = [ThiS sulfur-carrier protein]-C-terminal Gly-Gly + 2-[(2R,5Z)-2-carboxy-4-methylthiazol-5(2H)-ylidene]ethyl phosphate + 2 H2O + H(+). Its pathway is cofactor biosynthesis; thiamine diphosphate biosynthesis. Catalyzes the rearrangement of 1-deoxy-D-xylulose 5-phosphate (DXP) to produce the thiazole phosphate moiety of thiamine. Sulfur is provided by the thiocarboxylate moiety of the carrier protein ThiS. In vitro, sulfur can be provided by H(2)S. The chain is Thiazole synthase from Rhodopseudomonas palustris (strain BisB5).